Here is a 507-residue protein sequence, read N- to C-terminus: Serine hydroxymethyltransferase (507 aa).

N6-(pyridoxal phosphate)lysine is present on K283.

The protein belongs to the SHMT family. Homotetramer. The cofactor is pyridoxal 5'-phosphate.

It catalyses the reaction (6R)-5,10-methylene-5,6,7,8-tetrahydrofolate + glycine + H2O = (6S)-5,6,7,8-tetrahydrofolate + L-serine. The protein operates within one-carbon metabolism; tetrahydrofolate interconversion. Functionally, interconversion of serine and glycine. This is Serine hydroxymethyltransferase (mel-32) from Caenorhabditis elegans.